The chain runs to 1012 residues: Centriole and centriolar satellite protein OFD1 (1012 aa).

Residues L70–K102 form the LisH domain. Coiled coils occupy residues Q189 to V557 and D622 to K662. Positions T609 to L665 are mediates homooligomerization. The segment at W615–W1012 is mediates the interaction with SDCCAG8. Phosphoserine is present on residues S663, S669, S686, and S720. The disordered stretch occupies residues G719–R744. Positions S720–T737 are enriched in low complexity. Residue S735 is modified to Phosphoserine; by PKA. 4 positions are modified to phosphoserine: S745, S774, S789, and S811. Residues R757–K794 are disordered. Residues S764–S774 show a composition bias toward pro residues. 2 disordered regions span residues F824–V904 and K963–W1012. Positions S867–N956 form a coiled coil. Composition is skewed to basic and acidic residues over residues K871 to V904 and S973 to V982.

It belongs to the OFD1 family. Homooligomer. Interacts with LCA5. Interacts with RUVBL1; the interaction is direct and may mediate interaction with the NuA4 histone acetyltransferase complex. Interacts with SDCCAG8; the interaction is direct. Interacts with MAP1LC3B. Interacts with C2CD3; OFD1 may act as a negative regulator of C2CD3. Forms a complex with KIAA0753/OFIP and CEP20/FOR20; the interaction with CEP20 is detected only in the presence of KIAA0753. Interacts with PCM1; this interaction may be mediated by KIAA0753/OFIP. Interacts with TBC1D31; regulates OFD1 activity in cilium assembly. Phosphorylated. Phosphorylation at Ser-735, by the cAMP-dependent protein kinase PKA, triggers ubiquitination and proteasomal degradation of OFD1. Also increases its interaction with TBC1D31 and regulates its function in ciliogenesis. Post-translationally, ubiquitinated by PJA2, upon phosphorylation at Ser-735 by PKA, leads to the proteasomal degradation of OFD1. As to expression, widely expressed. Expressed in 9 and 14 weeks old embryos in metanephric mesenchyme, oral mucosa, lung, heart, nasal and cranial cartilage, and brain. Expressed in metanephros, brain, tongue, and limb.

The protein localises to the cytoplasm. It is found in the cytoskeleton. It localises to the microtubule organizing center. Its subcellular location is the centrosome. The protein resides in the centriole. The protein localises to the cilium basal body. It is found in the nucleus. It localises to the centriolar satellite. Component of the centrioles controlling mother and daughter centrioles length. Recruits to the centriole IFT88 and centriole distal appendage-specific proteins including CEP164. Involved in the biogenesis of the cilium, a centriole-associated function. The cilium is a cell surface projection found in many vertebrate cells required to transduce signals important for development and tissue homeostasis. Plays an important role in development by regulating Wnt signaling and the specification of the left-right axis. Only OFD1 localized at the centriolar satellites is removed by autophagy, which is an important step in the ciliogenesis regulation. The protein is Centriole and centriolar satellite protein OFD1 (OFD1) of Homo sapiens (Human).